Reading from the N-terminus, the 495-residue chain is MAKQKIRVRYAPSPTGHLHIGNARTALFNYLFARHYKGKFILRIEDTDQSRNIADGEKSQIDNLKWLGMDWDEGPDKPGEYGPYRQSERKGIYQPLIDQLVAEGKAYESYMTEEELAAQREEQKANGEMPHYVDEYAGLSPEQKEQKIADAKAAGIEPVIRFKVPTNTTYEWDDLVKGHISFESETIGGDFVIQKRDGMPTYNFAVVVDDHMMEISHVFRGDDHVANTPKQLMIYEALGWDAPQFGHMSLIINTETGKKLSKRDESILQFIEQYRSLGYLPEAMLNFIILLGWSPVGESEIFTLREFVKMYDEKRLSKSPAAFDAKKLEWINNQYVKAADEDRIMHSALLQLINAGKIEKNPAPMKVEWARKLINLFKRQMSYTAQIVEFTELFFNGPENIDEEAKEELATDDALPVLKALEKQFSDLPVFDTVNILAAIKAVQKETGIKGRKLWMPIRIAITHEMHGPELPESLELLGYELSMQHLRAMIEELS.

The 'HIGH' region motif lies at 12–22 (PSPTGHLHIGN). A 'KMSKS' region motif is present at residues 259-263 (KLSKR). K262 is a binding site for ATP.

The protein belongs to the class-I aminoacyl-tRNA synthetase family. Glutamate--tRNA ligase type 1 subfamily. As to quaternary structure, monomer.

It localises to the cytoplasm. The catalysed reaction is tRNA(Glu) + L-glutamate + ATP = L-glutamyl-tRNA(Glu) + AMP + diphosphate. Catalyzes the attachment of glutamate to tRNA(Glu) in a two-step reaction: glutamate is first activated by ATP to form Glu-AMP and then transferred to the acceptor end of tRNA(Glu). The protein is Glutamate--tRNA ligase of Pediococcus pentosaceus (strain ATCC 25745 / CCUG 21536 / LMG 10740 / 183-1w).